Here is a 332-residue protein sequence, read N- to C-terminus: Biotin synthase (332 aa).

The Radical SAM core domain occupies 53–282; that stretch reads HFGKKVKLNM…TKEIRISGGR (230 aa). Residues Cys71, Cys75, and Cys78 each coordinate [4Fe-4S] cluster. [2Fe-2S] cluster-binding residues include Cys115, Cys147, Cys207, and Arg277.

The protein belongs to the radical SAM superfamily. Biotin synthase family. As to quaternary structure, homodimer. It depends on [4Fe-4S] cluster as a cofactor. Requires [2Fe-2S] cluster as cofactor.

The enzyme catalyses (4R,5S)-dethiobiotin + (sulfur carrier)-SH + 2 reduced [2Fe-2S]-[ferredoxin] + 2 S-adenosyl-L-methionine = (sulfur carrier)-H + biotin + 2 5'-deoxyadenosine + 2 L-methionine + 2 oxidized [2Fe-2S]-[ferredoxin]. Its pathway is cofactor biosynthesis; biotin biosynthesis; biotin from 7,8-diaminononanoate: step 2/2. Catalyzes the conversion of dethiobiotin (DTB) to biotin by the insertion of a sulfur atom into dethiobiotin via a radical-based mechanism. In Bacillus cereus (strain ATCC 10987 / NRS 248), this protein is Biotin synthase.